The following is a 45-amino-acid chain: Large ribosomal subunit protein bL36 (45 aa).

The protein belongs to the bacterial ribosomal protein bL36 family.

The protein is Large ribosomal subunit protein bL36 of Aliivibrio salmonicida (strain LFI1238) (Vibrio salmonicida (strain LFI1238)).